Here is a 181-residue protein sequence, read N- to C-terminus: Peptidyl-tRNA hydrolase (181 aa).

Tyr-14 is a binding site for tRNA. Residue His-19 is the Proton acceptor of the active site. TRNA is bound by residues Phe-61, Asn-63, and Asn-107.

Belongs to the PTH family. As to quaternary structure, monomer.

Its subcellular location is the cytoplasm. It catalyses the reaction an N-acyl-L-alpha-aminoacyl-tRNA + H2O = an N-acyl-L-amino acid + a tRNA + H(+). Its function is as follows. Hydrolyzes ribosome-free peptidyl-tRNAs (with 1 or more amino acids incorporated), which drop off the ribosome during protein synthesis, or as a result of ribosome stalling. In terms of biological role, catalyzes the release of premature peptidyl moieties from peptidyl-tRNA molecules trapped in stalled 50S ribosomal subunits, and thus maintains levels of free tRNAs and 50S ribosomes. The chain is Peptidyl-tRNA hydrolase from Campylobacter fetus subsp. fetus (strain 82-40).